The following is a 116-amino-acid chain: Protein Wnt-5a (116 aa).

Ser1 carries the O-palmitoleoyl serine; by PORCN lipid modification. 2 N-linked (GlcNAc...) asparagine glycosylation sites follow: Asn69 and Asn83. Cys82 and Cys97 are disulfide-bonded.

This sequence belongs to the Wnt family. Post-translationally, palmitoleoylation is required for efficient binding to frizzled receptors. Depalmitoleoylation leads to Wnt signaling pathway inhibition.

It is found in the secreted. It localises to the extracellular space. Its subcellular location is the extracellular matrix. Ligand for members of the frizzled family of seven transmembrane receptors. Can activate or inhibit canonical Wnt signaling, depending on receptor context. Required during embryogenesis for extension of the primary anterior-posterior axis. This chain is Protein Wnt-5a (WNT5A), found in Anser caerulescens (Snow goose).